The sequence spans 147 residues: UPF0306 protein YhbP (147 aa).

The protein belongs to the UPF0306 family.

The protein is UPF0306 protein YhbP of Shigella boydii serotype 4 (strain Sb227).